We begin with the raw amino-acid sequence, 401 residues long: Phosrestin-1 (401 aa).

The protein belongs to the arrestin family. Inner and outer segments, and the inner plexiform regions of the retina.

Undergoes light-induced phosphorylation, probably plays an important role in the photoreceptor transduction. In Drosophila miranda (Fruit fly), this protein is Phosrestin-1 (Arr2).